The primary structure comprises 349 residues: FK506-binding protein-like (349 aa).

The residue at position 3 (T3) is a Phosphothreonine. The segment at 36–55 (RQQPRDPPTETLELEVSPDP) is disordered. 3 TPR repeats span residues 210–243 (AREE…LLTL), 252–285 (TVLH…EPGH), and 286–319 (LKAL…DPKN).

As to quaternary structure, forms a ternary complex with CDKN1A/p21 and HSP90AB1/Hsp90. As to expression, ubiquitously expressed with higher levels in testis.

Its function is as follows. May be involved in response to X-ray. Regulates p21 protein stability by binding to Hsp90 and p21. This is FK506-binding protein-like (FKBPL) from Homo sapiens (Human).